The primary structure comprises 259 residues: Global transcriptional regulator CodY (259 aa).

The segment at Met-1–Leu-155 is GAF domain. A DNA-binding region (H-T-H motif) is located at residues Ala-203–Arg-222. A Phosphoserine modification is found at Ser-215.

Belongs to the CodY family.

It is found in the cytoplasm. Its function is as follows. DNA-binding global transcriptional regulator which is involved in the adaptive response to starvation and acts by directly or indirectly controlling the expression of numerous genes in response to nutrient availability. During rapid exponential growth, CodY is highly active and represses genes whose products allow adaptation to nutrient depletion. The chain is Global transcriptional regulator CodY from Bacillus mycoides (strain KBAB4) (Bacillus weihenstephanensis).